The primary structure comprises 552 residues: Probable acyl-activating enzyme 5, peroxisomal (552 aa).

A Microbody targeting signal motif is present at residues 550-552; sequence SRM.

Belongs to the ATP-dependent AMP-binding enzyme family. As to expression, expressed in roots, stems and developing seeds.

It is found in the peroxisome. May act as an acid--thiol ligase that activates carboxylic acids by forming acyl-CoAs. The sequence is that of Probable acyl-activating enzyme 5, peroxisomal (AAE5) from Arabidopsis thaliana (Mouse-ear cress).